Reading from the N-terminus, the 548-residue chain is Glucose-6-phosphate isomerase (548 aa).

E353 serves as the catalytic Proton donor. Catalysis depends on residues H384 and K512.

Belongs to the GPI family.

The protein resides in the cytoplasm. The catalysed reaction is alpha-D-glucose 6-phosphate = beta-D-fructose 6-phosphate. Its pathway is carbohydrate biosynthesis; gluconeogenesis. It functions in the pathway carbohydrate degradation; glycolysis; D-glyceraldehyde 3-phosphate and glycerone phosphate from D-glucose: step 2/4. Catalyzes the reversible isomerization of glucose-6-phosphate to fructose-6-phosphate. The chain is Glucose-6-phosphate isomerase from Chlorobium chlorochromatii (strain CaD3).